The primary structure comprises 71 residues: Cruzioseptin-2 (71 aa).

Residues 1 to 22 form the signal peptide; that stretch reads MAFLKKSLFLVLFLGLVSLSIC. Residues 23 to 43 constitute a propeptide that is removed on maturation; it reads EEEKREEENEEVQEDDDQSEE. A Glutamine amide modification is found at Q68. Residues 70–71 constitute a propeptide that is removed on maturation; that stretch reads EQ.

In terms of tissue distribution, expressed by the skin glands.

It localises to the secreted. Functionally, has antimicrobial activity against Gram-negative bacterium E.coli (MIC=26.35 uM), against Gram-positive bacterium S.aureus (MIC=6.59 uM) and against fungus C.albicans (MIC=13.18 uM). At higher concentrations also has a bactericidal and fungicidal effect. Has hemagglutinating activity against horse erythrocytes. The sequence is that of Cruzioseptin-2 from Cruziohyla calcarifer (Splendid leaf frog).